The chain runs to 897 residues: Leucine--tRNA ligase (897 aa).

A 'HIGH' region motif is present at residues 49 to 59; sequence PYPSGKLHMGH. The short motif at 654 to 658 is the 'KMSKS' region element; sequence KMSKS. Lys657 provides a ligand contact to ATP.

Belongs to the class-I aminoacyl-tRNA synthetase family.

The protein resides in the cytoplasm. It carries out the reaction tRNA(Leu) + L-leucine + ATP = L-leucyl-tRNA(Leu) + AMP + diphosphate. This is Leucine--tRNA ligase from Methylibium petroleiphilum (strain ATCC BAA-1232 / LMG 22953 / PM1).